The sequence spans 802 residues: Leucine--tRNA ligase (802 aa).

Positions 40 to 51 (PYPSGAGLHVGH) match the 'HIGH' region motif. The 'KMSKS' region motif lies at 576-580 (KMSKS). An ATP-binding site is contributed by lysine 579.

It belongs to the class-I aminoacyl-tRNA synthetase family.

The protein localises to the cytoplasm. It catalyses the reaction tRNA(Leu) + L-leucine + ATP = L-leucyl-tRNA(Leu) + AMP + diphosphate. In Bacillus cereus (strain B4264), this protein is Leucine--tRNA ligase.